The following is a 245-amino-acid chain: Leucyl/phenylalanyl-tRNA--protein transferase (245 aa).

The protein belongs to the L/F-transferase family.

Its subcellular location is the cytoplasm. The catalysed reaction is N-terminal L-lysyl-[protein] + L-leucyl-tRNA(Leu) = N-terminal L-leucyl-L-lysyl-[protein] + tRNA(Leu) + H(+). It carries out the reaction N-terminal L-arginyl-[protein] + L-leucyl-tRNA(Leu) = N-terminal L-leucyl-L-arginyl-[protein] + tRNA(Leu) + H(+). The enzyme catalyses L-phenylalanyl-tRNA(Phe) + an N-terminal L-alpha-aminoacyl-[protein] = an N-terminal L-phenylalanyl-L-alpha-aminoacyl-[protein] + tRNA(Phe). Functionally, functions in the N-end rule pathway of protein degradation where it conjugates Leu, Phe and, less efficiently, Met from aminoacyl-tRNAs to the N-termini of proteins containing an N-terminal arginine or lysine. The chain is Leucyl/phenylalanyl-tRNA--protein transferase from Paraburkholderia xenovorans (strain LB400).